We begin with the raw amino-acid sequence, 177 residues long: MMETKEKVVYPRYAVIRLRGIPTTPRDIATTLHLLRLRRKFTMVVVPGTPSIIGMIQKVNDWVTWGEIDADTLAEVLKKRGRIVGDKPLTLEYLQKWGWQSFEEVALAYITGEIDSLSCRKVRVREGQRPPCIPYLKPFFRLHPPRGGLNSVKLHFSVGGDLGYRGPLINDLIRRML.

The protein belongs to the universal ribosomal protein uL30 family. Part of the 50S ribosomal subunit.

This chain is Large ribosomal subunit protein uL30, found in Pyrobaculum islandicum (strain DSM 4184 / JCM 9189 / GEO3).